A 62-amino-acid chain; its full sequence is Prokaryotic ubiquitin-like protein Pup 2 (62 aa).

The interval 1-34 (MRQEKPKRHGREDDEPPEPAPAGRARDTTVGDDT) is disordered. Residues 21-56 (PAGRARDTTVGDDTDELLDEIDGVLEENAVEFVRSY) are ARC ATPase binding. Glu-62 is covalently cross-linked (Isoglutamyl lysine isopeptide (Glu-Lys) (interchain with K-? in acceptor proteins)).

The protein belongs to the prokaryotic ubiquitin-like protein family. Strongly interacts with the proteasome-associated ATPase ARC through a hydrophobic interface; the interacting region of Pup lies in its C-terminal half. There is one Pup binding site per ARC hexamer ring.

Its pathway is protein degradation; proteasomal Pup-dependent pathway. Functionally, protein modifier that is covalently attached to lysine residues of substrate proteins, thereby targeting them for proteasomal degradation. The tagging system is termed pupylation. In Saccharopolyspora erythraea (strain ATCC 11635 / DSM 40517 / JCM 4748 / NBRC 13426 / NCIMB 8594 / NRRL 2338), this protein is Prokaryotic ubiquitin-like protein Pup 2.